Here is a 325-residue protein sequence, read N- to C-terminus: Pyruvate dehydrogenase E1 component subunit beta (325 aa).

Glu-60 provides a ligand contact to thiamine diphosphate.

Heterodimer of an alpha and a beta chain. Requires thiamine diphosphate as cofactor.

The enzyme catalyses N(6)-[(R)-lipoyl]-L-lysyl-[protein] + pyruvate + H(+) = N(6)-[(R)-S(8)-acetyldihydrolipoyl]-L-lysyl-[protein] + CO2. Its function is as follows. The pyruvate dehydrogenase complex catalyzes the overall conversion of pyruvate to acetyl-CoA and CO(2). It contains multiple copies of three enzymatic components: pyruvate dehydrogenase (E1), dihydrolipoamide acetyltransferase (E2) and lipoamide dehydrogenase (E3). The sequence is that of Pyruvate dehydrogenase E1 component subunit beta (pdhB) from Staphylococcus aureus (strain COL).